The following is a 91-amino-acid chain: Late embryogenesis abundant protein EMB564 (91 aa).

2 stretches are compositionally biased toward basic and acidic residues: residues 1–19 and 32–51; these read MASG…REGE and EAQE…RREQ. A disordered region spans residues 1 to 91; sequence MASGQESRKE…VTIDESKFTK (91 aa).

It belongs to the small hydrophilic plant seed protein family.

Its function is as follows. LEA proteins are late embryonic proteins abundant in higher plant seed embryos. They may play an essential role in seed survival and in controlling water exchanges during seed desiccation and imbibition. In Zea mays (Maize), this protein is Late embryogenesis abundant protein EMB564.